The following is a 185-amino-acid chain: Deoxyuridine 5'-triphosphate nucleotidohydrolase (185 aa).

The interval Met-1–Gln-23 is disordered. Residues Arg-95–Gly-97, Asn-108, Thr-112–Asp-114, and Lys-122 contribute to the substrate site. Positions Asp-160–Asp-185 are disordered. The span at Gly-175–Asp-185 shows a compositional bias: gly residues.

It belongs to the dUTPase family. Mg(2+) serves as cofactor.

The enzyme catalyses dUTP + H2O = dUMP + diphosphate + H(+). It participates in pyrimidine metabolism; dUMP biosynthesis; dUMP from dCTP (dUTP route): step 2/2. This enzyme is involved in nucleotide metabolism: it produces dUMP, the immediate precursor of thymidine nucleotides and it decreases the intracellular concentration of dUTP so that uracil cannot be incorporated into DNA. The chain is Deoxyuridine 5'-triphosphate nucleotidohydrolase from Bartonella quintana (strain Toulouse) (Rochalimaea quintana).